The following is a 295-amino-acid chain: MHKLLLIITVFFTFNVAQASLTSIVASVNDKPITLNEFHARKKMIMALNNIENLTADQDKQLNDLAINSLIDESLLFQYAGDREIPQDEIDNAIKSIEDRNKMAHGSLLQYLKNKSVNPESFILQIKSELIKMNILSSLSRSVQVSNKEIDVAILSSDQKDVEILMQVFRSKDGSNKAFTKMNHLKNRLKKCSDVKRTLYDKFATMQIITSKLSNIEGVKQTIVKDLIPDKASNVFEVNNKFEIILVCSKKILNVNADENNYVVNFLTNKKISQKAQKIFKNMRKKAAIRIMFPS.

Positions 1–19 are cleaved as a signal peptide; the sequence is MHKLLLIITVFFTFNVAQA.

This is an uncharacterized protein from Rickettsia prowazekii (strain Madrid E).